A 39-amino-acid polypeptide reads, in one-letter code: Potassium channel toxin alpha-KTx 2.5 (39 aa).

Intrachain disulfides connect Cys-7-Cys-29, Cys-13-Cys-34, and Cys-17-Cys-36.

This sequence belongs to the short scorpion toxin superfamily. Potassium channel inhibitor family. Alpha-KTx 02 subfamily. As to expression, expressed by the venom gland.

It localises to the secreted. Its function is as follows. Potent selective inhibitor of Kv1.1/KCNA1, Kv1.2/KCNA2, Kv1.3/KCNA3 voltage-gated potassium channels. Weak inhibitor of Kv1.6/KCNA6 potassium channel. It also shows a weak interaction with nicotinic acetylcholine receptors (nAChR), suggesting it may weakly inhibit it. The sequence is that of Potassium channel toxin alpha-KTx 2.5 from Centruroides limbatus (Bark scorpion).